The sequence spans 208 residues: Outer-membrane lipoprotein carrier protein (208 aa).

The first 22 residues, methionine 1 to alanine 22, serve as a signal peptide directing secretion.

It belongs to the LolA family. Monomer.

It localises to the periplasm. Functionally, participates in the translocation of lipoproteins from the inner membrane to the outer membrane. Only forms a complex with a lipoprotein if the residue after the N-terminal Cys is not an aspartate (The Asp acts as a targeting signal to indicate that the lipoprotein should stay in the inner membrane). This chain is Outer-membrane lipoprotein carrier protein, found in Shewanella baltica (strain OS223).